Consider the following 123-residue polypeptide: UPF0231 protein PMI2039 (123 aa).

It belongs to the UPF0231 family.

This chain is UPF0231 protein PMI2039, found in Proteus mirabilis (strain HI4320).